A 312-amino-acid polypeptide reads, in one-letter code: Beta-ketoacyl-[acyl-carrier-protein] synthase III (312 aa).

Catalysis depends on residues C112 and H237. The tract at residues 238 to 242 (QANIR) is ACP-binding. The active site involves N267.

This sequence belongs to the thiolase-like superfamily. FabH family. In terms of assembly, homodimer.

It localises to the cytoplasm. It carries out the reaction (2S)-2-methylbutanoyl-CoA + malonyl-[ACP] + H(+) = (4S)-4-methyl-3-oxohexanoyl-[ACP] + CO2 + CoA. The catalysed reaction is 2-methylpropanoyl-CoA + malonyl-[ACP] + H(+) = 4-methyl-3-oxopentanoyl-[ACP] + CO2 + CoA. It catalyses the reaction 3-methylbutanoyl-CoA + malonyl-[ACP] + H(+) = 5-methyl-3-oxohexanoyl-[ACP] + CO2 + CoA. The enzyme catalyses malonyl-[ACP] + acetyl-CoA + H(+) = 3-oxobutanoyl-[ACP] + CO2 + CoA. Its pathway is lipid metabolism; fatty acid biosynthesis. Functionally, catalyzes the condensation reaction of fatty acid synthesis by the addition to an acyl acceptor of two carbons from malonyl-ACP. Catalyzes the first condensation reaction which initiates fatty acid synthesis and may therefore play a role in governing the total rate of fatty acid production. Possesses both acetoacetyl-ACP synthase and acetyl transacylase activities. Can use branched-chain acyl-CoAs, with a preference for 2-methylbutanoyl-CoA, the precursor of odd-numbered anteiso fatty acids, at 30 degrees Celsius, which is further increased at a low temperature. Shows weak activity with acetyl-CoA. The polypeptide is Beta-ketoacyl-[acyl-carrier-protein] synthase III (Listeria monocytogenes serotype 1/2a (strain 10403S)).